A 261-amino-acid polypeptide reads, in one-letter code: Indole-3-glycerol phosphate synthase (261 aa).

This sequence belongs to the TrpC family.

It carries out the reaction 1-(2-carboxyphenylamino)-1-deoxy-D-ribulose 5-phosphate + H(+) = (1S,2R)-1-C-(indol-3-yl)glycerol 3-phosphate + CO2 + H2O. The protein operates within amino-acid biosynthesis; L-tryptophan biosynthesis; L-tryptophan from chorismate: step 4/5. The protein is Indole-3-glycerol phosphate synthase of Oceanobacillus iheyensis (strain DSM 14371 / CIP 107618 / JCM 11309 / KCTC 3954 / HTE831).